Reading from the N-terminus, the 3843-residue chain is MVVSAGPWSSEKAEMNILEINETLRPQLAEKKQQFRNLKEKCFLTQLAGFLANRQKKYKYEECKDLIKFMLRNERQFKEEKLAEQLKQAEELRQYKVLFHSQERELTQLREKLREGRDASRSLNEHLQALLTPDEPDKSQGQDLQEQLAEGCRLAQHLVQKLSPENDNDDDEDVQVEVAEKVQKSSAPREMQKAEEKEVPEDSLEECAITYSNSHGPYDSNQPHRKTKITFEEDKVDSTLIGSSSHVEWEDAVHIIPENESDDEEEEEKGPVSPRNLQESEEEEVPQESWDEGYSTLSIPPEMLASYQSYSSTFHSLEEQQVCMAVDIGRHRWDQVKKEDQEATGPRLSRELLDEKGPEVLQDSLDRCYSTPSGCLELTDSCQPYRSAFYVLEQQRVGLAIDMDEIEKYQEVEEDQDPSCPRLSRELLDEKEPEVLQDSLDRCYSIPSGYLELPDLGQPYSSAVYSLEEQYLGLALDVDRIKKDQEEEEDQDPPCPRLSRELVEVVEPEVLQDSLDRCYSTPSSCLEQPDSCQPYGSSFYALEEKHVGFSLDVGEIEKKGKGKKRRGRRSKKERRRGRKEGEEDQNPPCPRLSRELLDEKGPEVLQDSLDRCYSTPSGCLELTDSCQPYRSAFYILEQQCVGLAVDMDEIEKYQEVEEDQDPSCPRLSRELLDEKEPEVLQDSLDRCYSIPSGYLELPDLGQPYSSAVYSLEEQYLGLALDVDRIKKDQEEEEDQDPPCPRLSRELVEVVEPEVLQDSLDRCYSTPSSCLEQPDSCQPYGSSFYALEEKHVGFSLDVGEIEKKGKGKKRRGRRSKKERRRGRKEGEEDQNPPCPRLSRELLDEKGPEVLQDSLDRCYSTPSGCLELTDSCQPYRSAFYILEQQCVGLAIDMDEIEKYQEVEEDQDPSCPRLSRELLDEKEPEVLQDSLDRCYSIPSGYLELPDLGQPYSSAVYSLEEQYLGLALDVDRIKKDQEEEEDQDPPCPRLSRELVEVVEPEVLQDSLDRCYSTPSSCLEQPDSCQPYGSSFYALEEKHVGFSLDVGEIEKKGKGKKRRGRRSKKERRRGRKEGEEDQNPPCPRLSRELLDEKGPEVLQDSLDRCYSTPSGCLELTDSCQPYRSAFYILEQQCVGLAVDMDEIEKYQEVEEDQDPSCPRLSRELLDEKEPEVLQDSLDRCYSIPSGYLELPDLGQPYSSAVYSLEEQYLGLALDVDRIKKDQEEEEDQDPPCPRLSRELVEVVEPEVLQDSLDRCYSTPSSCLEQPDSCQPYGSSFYALEEKHVGFSLDVGEIEKKGKGKKRRGRRSKKERRRGRKEGEEDQNPPCPRLSRELLDEKGPEVLQDSLDRCYSTPSGCLELTDSCQPYRSAFYILEQQCVGLAVDMDEIEKYQEVEEDQDPSCPRLSRELLDEKEPEVLQDSLDRCYSIPSGYLELPDLGQPYSSAVYSLEEQYLGLALDVDRIKKDQEEEEDQDPPCPRLSRELVEVVEPEVLQDSLDRCYSTPSSCLEQPDSCQPYGSSFYALEEKHVGFSLDVGEIEKKGKGKKRRGRRSKKERRRGRKEGEEDQNPPCPRLSRELLDEKGPEVLQDSLDRCYSTPSGCLELTDSCQPYRSAFYILEQQCVGLAVDMDEIEKYQEVEEDQDPSCPRLSRELLDEKEPEVLQDSLDRCYSIPSGYLELPDLGQPYSSAVYSLEEQYLGLALDVDRIKKDQEEEEDQDPPCPRLSRELLEVVEPEVLQDSLDRCYSTPSSCLEQPDSCQPYGSSFYALEEKHVGFSLDVGEIEKKGKGKKRRGRRSKKERRRGRKEGEEDQNPPCPRLSRELLDEKGPEVLQDSLDRCYSTPSGCLELTDSCQPYRSAFYILEQQCVGLAVDMDEIEKYQEVEEDQDPSCPRLSRELLDEKEPEVLQDSLDRCYSTPSGYLELPDLGQPYSSAVYSLEEQYLGLALDVDRIKKDQEEEEDQGPPCPRLSRELLEVVEPEVLQDSLDRCYSTPSSCLEQPDSCQPYGSSFYALEEKHVGFSLDVGEIEKKGKGKKRRGRRSKKERRRGRKEGEEDQNPPCPRLSRELLDEKGPEVLQDSLDRCYSTPSGCLELTDSCQPYRSAFYILEQQCVGLAVDMDEIEKYQEVEEDQDPSCPRLSRELLDEKEPEVLQDSLDRCYSTPSGYLELPDLGQPYSSAVYSLEEQYLGLALDVDRIKKDQEEEEDQGPPCPRLSRELLEVVEPEVLQDSLDRCYSTPSSCLEQPDSCQPYGSSFYALEEKHVGFSLDVGEIEKKGKGKKRRGRRSKKERRRGRKEGEEDQNPPCPRLSRELLDEKGPEVLQDSLDRCYSTPSGCLELTDSCQPYRSAFYILEQQCVGLAVDMDEIEKYQEVEEDQDPSCPRLSRELLDEKEPEVLQDSLDRCYSTPSGYLELPDLGQPYSSAVYSLEEQYLGLALDVDRIKKDQEEEEDQGPPCPRLSRELLEVVEPEVLQDSLDRCYSTPSSCLEQPDSCQPYGSSFYALEEKHVGFSLDVGEIEKKGKGKKRRGRRSKKERRRGRKEGEEDQNPPCPRLSRELLDEKGPEVLQDSLDRCYSTPSGCLELTDSCQPYRSAFYILEQQCVGLAVDMDEIEKYQEVEEDQDPSCPRLSRELLDEKEPEVLQDSLDRCYSTPSGYLELPDLGQPYSSAVYSLEEQYLGLALDVDRIKKDQEEEEDQGPPCPRLSRELLEVVEPEVLQDSLDRCYSTPSSCLEQPDSCQPYGSSFYALEEKHVGFSLDVGEIEKKGKGKKRRGRRSKKERRRGRKEGEEDQNPPCPRLSRELLDEKGPEVLQDSLDRCYSTPSGCLELTDSCQPYRSAFYILEQQCVGLAVDMDEIEKYQEVEEDQDPSCPRLSRELLDEKEPEVLQDSLDRCYSTPSGYLELPDLGQPYSSAVYSLEEQYLGLALDVDRIKKDQEEEEDQGPPCPRLSRELLEVVEPEVLQDSLDRCYSTPSSCLEQPDSCQPYGSSFYALEEKHVGFSLDVGEIEKKGKGKKRRGRRSKKERRRGRKEGEEDQNPPCPRLSRELLDEKGPEVLQDSLDRCYSTPSGCLELTDSCQPYRSAFYILEQQCVGLAVDMDEIEKYQEVEEDQDPSCPRLSRELLAEKEPEVLQDPLDRCYSTPSGYLELPDLGQPYSSAVYSLEEQYLGLALDVDRIKKDQEEEEDQGPPCPRLSRELLEVVEPEVLQDSLDRCYSTPSSCLEQPDSCQPYGSSFYALEEKHVGFSLDVGEIEKKGKGKKRRGRRSKKERRRGRKEGEEDQNPPCPRLSRELLDEKGPEVLQDSLDRCYSTPSGCLELTDSCQPYRSAFYILEQQCVGLAVDMDEIEKYQEVEEDQDPSCPRLSRELLAEKEPEVLQDPLDRCYSTPSGYLELPDLGQPYSSAVYSLEEQYLGLALDVDRIKKDQEEEEDQGPPCPRLSRELLEVVEPEVLQDSLDRCYSTPSSCLEQPDSCQPYGSSFYALEEKHVGFSLDVGEIEKKGKGKKRRGRRSKKERRRGRKEGEEDQNPPCPRLSRELLDEKGPEVLQDSLDRCYSTPSGCLELTDSCQPYRSAFYILEQQCVGLAVDMDEIEKYQEVEEDQDPSCPRLSRELLAEKEPEVLQDPLDRCYSTPSGYLELPDLGQPYSSAVYSLEEQYLGLALDVDRIKKDQEEEEDQGPPCPRLSRELLEVVEPEVLQDSLDRCYSTPSSCLEQPDSCQPYGSSFYALEEKHVGFSLDVGEIEKKGKGKKRRGRRSKKERRRGRKEGEEDQNPPCPRLNSVLMEVEEPEVLQDSLDGCYSTPSMYFELPDSFQHYRSVFYSFEEEHISFALYLDNRFFTLTVTSLHLVFQMLVIFPQ.

A coiled-coil region spans residues 70 to 130 (MLRNERQFKE…RSLNEHLQAL (61 aa)). 45 consecutive Olduvai domains span residues 165 to 257 (ENDN…HIIP), 258 to 329 (ENES…VDIG), 330 to 421 (RHRW…PSCP), 424 to 479 (SREL…LDVD), 480 to 572 (RIKK…RSKK), 573 to 665 (ERRR…PSCP), 668 to 723 (SREL…LDVD), 724 to 816 (RIKK…RSKK), 817 to 909 (ERRR…PSCP), 912 to 967 (SREL…LDVD), 968 to 1060 (RIKK…RSKK), 1061 to 1153 (ERRR…PSCP), 1156 to 1211 (SREL…LDVD), 1212 to 1304 (RIKK…RSKK), 1305 to 1397 (ERRR…PSCP), 1400 to 1455 (SREL…LDVD), 1456 to 1548 (RIKK…RSKK), 1549 to 1641 (ERRR…PSCP), 1644 to 1699 (SREL…LDVD), 1700 to 1792 (RIKK…RSKK), 1793 to 1885 (ERRR…PSCP), 1888 to 1943 (SREL…LDVD), 1944 to 2036 (RIKK…RSKK), 2037 to 2129 (ERRR…PSCP), 2132 to 2187 (SREL…LDVD), 2188 to 2280 (RIKK…RSKK), 2281 to 2373 (ERRR…PSCP), 2376 to 2431 (SREL…LDVD), 2432 to 2524 (RIKK…RSKK), 2525 to 2617 (ERRR…PSCP), 2620 to 2675 (SREL…LDVD), 2676 to 2768 (RIKK…RSKK), 2769 to 2861 (ERRR…PSCP), 2864 to 2919 (SREL…LDVD), 2920 to 3012 (RIKK…RSKK), 3013 to 3105 (ERRR…PSCP), 3108 to 3163 (SREL…LDVD), 3164 to 3256 (RIKK…RSKK), 3257 to 3349 (ERRR…PSCP), 3352 to 3407 (SREL…LDVD), 3408 to 3500 (RIKK…RSKK), 3501 to 3593 (ERRR…PSCP), 3596 to 3651 (SREL…LDVD), 3652 to 3744 (RIKK…RSKK), and 3745 to 3843 (ERRR…IFPQ). 2 disordered regions span residues 180 to 203 (EKVQ…PEDS) and 249 to 295 (WEDA…EGYS). 2 stretches are compositionally biased toward acidic residues: residues 259–268 (NESDDEEEEE) and 279–291 (ESEE…ESWD). Residues 559 to 597 (KGKGKKRRGRRSKKERRRGRKEGEEDQNPPCPRLSRELL) form a disordered region. The segment covering 560–578 (GKGKKRRGRRSKKERRRGR) has biased composition (basic residues). A disordered region spans residues 803-841 (KGKGKKRRGRRSKKERRRGRKEGEEDQNPPCPRLSRELL). Over residues 804–822 (GKGKKRRGRRSKKERRRGR) the composition is skewed to basic residues. Residues 1047–1085 (KGKGKKRRGRRSKKERRRGRKEGEEDQNPPCPRLSRELL) are disordered. Over residues 1048 to 1066 (GKGKKRRGRRSKKERRRGR) the composition is skewed to basic residues. The tract at residues 1291-1329 (KGKGKKRRGRRSKKERRRGRKEGEEDQNPPCPRLSRELL) is disordered. The span at 1292–1310 (GKGKKRRGRRSKKERRRGR) shows a compositional bias: basic residues. The segment at 1535–1573 (KGKGKKRRGRRSKKERRRGRKEGEEDQNPPCPRLSRELL) is disordered. Basic residues predominate over residues 1536 to 1554 (GKGKKRRGRRSKKERRRGR). The disordered stretch occupies residues 1779 to 1817 (KGKGKKRRGRRSKKERRRGRKEGEEDQNPPCPRLSRELL). Residues 1780–1798 (GKGKKRRGRRSKKERRRGR) show a composition bias toward basic residues. The tract at residues 2023 to 2061 (KGKGKKRRGRRSKKERRRGRKEGEEDQNPPCPRLSRELL) is disordered. Positions 2024–2042 (GKGKKRRGRRSKKERRRGR) are enriched in basic residues. The disordered stretch occupies residues 2267-2305 (KGKGKKRRGRRSKKERRRGRKEGEEDQNPPCPRLSRELL). Positions 2268 to 2286 (GKGKKRRGRRSKKERRRGR) are enriched in basic residues. The tract at residues 2511-2549 (KGKGKKRRGRRSKKERRRGRKEGEEDQNPPCPRLSRELL) is disordered. Over residues 2512–2530 (GKGKKRRGRRSKKERRRGR) the composition is skewed to basic residues. Positions 2755–2793 (KGKGKKRRGRRSKKERRRGRKEGEEDQNPPCPRLSRELL) are disordered. The span at 2756 to 2774 (GKGKKRRGRRSKKERRRGR) shows a compositional bias: basic residues. The disordered stretch occupies residues 2999 to 3037 (KGKGKKRRGRRSKKERRRGRKEGEEDQNPPCPRLSRELL). The span at 3000-3018 (GKGKKRRGRRSKKERRRGR) shows a compositional bias: basic residues. Residues 3243-3281 (KGKGKKRRGRRSKKERRRGRKEGEEDQNPPCPRLSRELL) form a disordered region. The span at 3244–3262 (GKGKKRRGRRSKKERRRGR) shows a compositional bias: basic residues. The tract at residues 3487–3525 (KGKGKKRRGRRSKKERRRGRKEGEEDQNPPCPRLSRELL) is disordered. Residues 3488–3506 (GKGKKRRGRRSKKERRRGR) show a composition bias toward basic residues. Positions 3731 to 3764 (KGKGKKRRGRRSKKERRRGRKEGEEDQNPPCPRL) are disordered. Positions 3732-3750 (GKGKKRRGRRSKKERRRGR) are enriched in basic residues.

This sequence belongs to the NBPF family.

Its subcellular location is the cytoplasm. This chain is NBPF family member NBPF19, found in Homo sapiens (Human).